The following is a 312-amino-acid chain: MPFCLTETSLPFGKKYKGKVRDTYDLGDQLILVTTDRQSAFDRCLAAVPYKGQVLNLTSVWWFKNTQSIVPNHLIAVPDPNVAIAKKCKIFPVEFVVRGYISGSTSTSLWTQYQKGVREYCGITFPDGLRKNQKLESPVITPTTKETIHDRPISPHEIVAEGWMTQEDWDETSSYALRLFQHGMEVAQQHGLILVDTKYEFGRDAEGRIVLVDEIHTPDSSRYWLFNGYQERFDAGKEPENIDKEFLRLWFVDHCDPYKDEVLPQAPQELIVTLASRYIQLYEMITGESFVYDSNPGPVNDRILHNIQHWLG.

It belongs to the SAICAR synthetase family.

The enzyme catalyses 5-amino-1-(5-phospho-D-ribosyl)imidazole-4-carboxylate + L-aspartate + ATP = (2S)-2-[5-amino-1-(5-phospho-beta-D-ribosyl)imidazole-4-carboxamido]succinate + ADP + phosphate + 2 H(+). Its pathway is purine metabolism; IMP biosynthesis via de novo pathway; 5-amino-1-(5-phospho-D-ribosyl)imidazole-4-carboxamide from 5-amino-1-(5-phospho-D-ribosyl)imidazole-4-carboxylate: step 1/2. This chain is Phosphoribosylaminoimidazole-succinocarboxamide synthase, found in Legionella pneumophila (strain Lens).